The sequence spans 33 residues: Protamine TP17 (33 aa).

The segment at 1-33 (MPRRRRSSSRPVRRRRRPRVSRRRRRRGRRRRR) is disordered.

Testis.

Its subcellular location is the nucleus. The protein resides in the chromosome. Its function is as follows. Protamines substitute for histones in the chromatin of sperm during the haploid phase of spermatogenesis. They compact sperm DNA into a highly condensed, stable and inactive complex. In Oncorhynchus mykiss (Rainbow trout), this protein is Protamine TP17.